Consider the following 394-residue polypeptide: uncharacterized protein (394 aa).

Helical transmembrane passes span 13–33 (LITTIHMVLTTMIHMALTTMI), 35–55 (MAPTTMIHMALTTMIPTVLPT), 73–95 (TTMTLTVPTTMTLTVPTTMTLTV), 110–130 (ALTVPTMTILMALTMMIHMVL), 152–172 (IHMVLTTMIHMALTTMIPTVL), 179–198 (LMVLTMTIRTAPATTMTLTV), 216–236 (VLLATMILTDLPITTTLTVLP), 241–261 (VLMVPTMTILMALTMMIHMVL), 267–287 (VLMVPATTIRMVLTTMIPTVL), 293–313 (VLMVPTTMIHTAPATTMTLTV), 340–360 (MMTLMVHLIEAVVINTVVTTI), and 372–392 (ILLCLDLSMKILCMSCGYVSA).

It is found in the membrane. This is an uncharacterized protein from Saccharomyces cerevisiae (strain ATCC 204508 / S288c) (Baker's yeast).